Here is a 476-residue protein sequence, read N- to C-terminus: MNSAVQAQLAELGIEGYLNQHQHKSLLRFLTCGSVDDGKSTLIGRLLHDSKQIYEDQLAAVHSDSQRVGTTGSRPDLALLVDGLQAEREQGITIDVAYRYFSTQKRKFIIADTPGHEQYTRNMATGASTCDLAVILIDARKGVLDQTRRHSFISNLLGLKHFVVAVNKMDLVEFSQQRFEEIKAEYLAFSKNLRGETDIQIIPISALEGDNVVELSQQMAWYQGPTLLEILEAVDVEKEKEAGEFRFPVQYVNRPNLDFRGFAGTISSGVVKVGDRITALPSGKSSTVARIVTFDGDLEQAQAGLAVTLTLADEIDISRGDLIVHHGANVELTNHLAADVVWMTEQPLQPGRDYDIKIAGKKTIGRVEHIHHQYDINNLSKHSAAELPLNGIGLCEWTFNESIALDNYQDCADTGGFIIIDRLTNVTVGAGMVSESLTEVTKASSDFSAFELELNALIRKHFPHWDAKDLSELLKK.

The tr-type G domain occupies 24–243 (KSLLRFLTCG…VDVEKEKEAG (220 aa)). The tract at residues 33 to 40 (GSVDDGKS) is G1. GTP is bound at residue 33 to 40 (GSVDDGKS). Positions 91-95 (GITID) are G2. Residues 112–115 (DTPG) are G3. Residues 112 to 116 (DTPGH) and 167 to 170 (NKMD) contribute to the GTP site. Residues 167 to 170 (NKMD) are G4. Residues 205–207 (SAL) are G5.

The protein belongs to the TRAFAC class translation factor GTPase superfamily. Classic translation factor GTPase family. CysN/NodQ subfamily. Heterodimer composed of CysD, the smaller subunit, and CysN.

The enzyme catalyses sulfate + ATP + H(+) = adenosine 5'-phosphosulfate + diphosphate. It functions in the pathway sulfur metabolism; hydrogen sulfide biosynthesis; sulfite from sulfate: step 1/3. In terms of biological role, with CysD forms the ATP sulfurylase (ATPS) that catalyzes the adenylation of sulfate producing adenosine 5'-phosphosulfate (APS) and diphosphate, the first enzymatic step in sulfur assimilation pathway. APS synthesis involves the formation of a high-energy phosphoric-sulfuric acid anhydride bond driven by GTP hydrolysis by CysN coupled to ATP hydrolysis by CysD. The chain is Sulfate adenylyltransferase subunit 1 from Vibrio vulnificus (strain YJ016).